The following is a 228-amino-acid chain: Demethylmenaquinone methyltransferase (228 aa).

Residues threonine 62, aspartate 80, 100 to 101 (DA), and serine 117 each bind S-adenosyl-L-methionine.

The protein belongs to the class I-like SAM-binding methyltransferase superfamily. MenG/UbiE family.

It carries out the reaction a 2-demethylmenaquinol + S-adenosyl-L-methionine = a menaquinol + S-adenosyl-L-homocysteine + H(+). Its pathway is quinol/quinone metabolism; menaquinone biosynthesis; menaquinol from 1,4-dihydroxy-2-naphthoate: step 2/2. Functionally, methyltransferase required for the conversion of demethylmenaquinol (DMKH2) to menaquinol (MKH2). The sequence is that of Demethylmenaquinone methyltransferase from Mycolicibacterium gilvum (strain PYR-GCK) (Mycobacterium gilvum (strain PYR-GCK)).